The chain runs to 244 residues: Small ribosomal subunit protein uS3 (244 aa).

In terms of domain architecture, KH type-2 spans isoleucine 38 to lysine 106. A compositionally biased stretch (basic and acidic residues) spans threonine 222 to lysine 235. The disordered stretch occupies residues threonine 222–arginine 244.

It belongs to the universal ribosomal protein uS3 family. Part of the 30S ribosomal subunit. Forms a tight complex with proteins S10 and S14.

Its function is as follows. Binds the lower part of the 30S subunit head. Binds mRNA in the 70S ribosome, positioning it for translation. The sequence is that of Small ribosomal subunit protein uS3 from Parabacteroides distasonis (strain ATCC 8503 / DSM 20701 / CIP 104284 / JCM 5825 / NCTC 11152).